A 352-amino-acid polypeptide reads, in one-letter code: tRNA pseudouridine synthase D (352 aa).

Aspartate 81 (nucleophile) is an active-site residue. The TRUD domain occupies 157 to 303 (GIPNYFGVQR…MEHERRILRL (147 aa)).

This sequence belongs to the pseudouridine synthase TruD family.

It catalyses the reaction uridine(13) in tRNA = pseudouridine(13) in tRNA. Its function is as follows. Responsible for synthesis of pseudouridine from uracil-13 in transfer RNAs. This is tRNA pseudouridine synthase D from Pseudomonas syringae pv. tomato (strain ATCC BAA-871 / DC3000).